Reading from the N-terminus, the 395-residue chain is Vibriobactin-specific isochorismate synthase (395 aa).

The protein belongs to the isochorismate synthase family.

The catalysed reaction is chorismate = isochorismate. The protein operates within siderophore biosynthesis; vibriobactin biosynthesis. This chain is Vibriobactin-specific isochorismate synthase (vibC), found in Vibrio cholerae serotype O1 (strain ATCC 39315 / El Tor Inaba N16961).